The chain runs to 214 residues: Mexicain (214 aa).

3 disulfide bridges follow: cysteine 22/cysteine 63, cysteine 56/cysteine 95, and cysteine 153/cysteine 200. Cysteine 25 is a catalytic residue. Residue cysteine 25 coordinates E64. Active-site residues include histidine 159 and asparagine 175.

The protein belongs to the peptidase C1 family. Expressed in latex.

The protein localises to the secreted. In terms of biological role, cysteine protease. The protein is Mexicain of Jacaratia mexicana (Wild papaya).